Here is a 260-residue protein sequence, read N- to C-terminus: Aliphatic sulfonates import ATP-binding protein SsuB 1 (260 aa).

An ABC transporter domain is found at valine 29 to leucine 243. Glycine 61–serine 68 is a binding site for ATP.

Belongs to the ABC transporter superfamily. Aliphatic sulfonates importer (TC 3.A.1.17.2) family. The complex is composed of two ATP-binding proteins (SsuB), two transmembrane proteins (SsuC) and a solute-binding protein (SsuA).

The protein localises to the cell membrane. It carries out the reaction ATP + H2O + aliphatic sulfonate-[sulfonate-binding protein]Side 1 = ADP + phosphate + aliphatic sulfonateSide 2 + [sulfonate-binding protein]Side 1.. Part of the ABC transporter complex SsuABC involved in aliphatic sulfonates import. Responsible for energy coupling to the transport system. This is Aliphatic sulfonates import ATP-binding protein SsuB 1 from Streptomyces avermitilis (strain ATCC 31267 / DSM 46492 / JCM 5070 / NBRC 14893 / NCIMB 12804 / NRRL 8165 / MA-4680).